Here is a 400-residue protein sequence, read N- to C-terminus: Acetate kinase (400 aa).

N10 is a binding site for Mg(2+). K17 contributes to the ATP binding site. A substrate-binding site is contributed by R91. The active-site Proton donor/acceptor is the D150. Residues 210-214 (HLGNG), 285-287 (DCR), and 333-337 (GIGEN) each bind ATP. E387 provides a ligand contact to Mg(2+).

This sequence belongs to the acetokinase family. As to quaternary structure, homodimer. Requires Mg(2+) as cofactor. Mn(2+) is required as a cofactor.

The protein resides in the cytoplasm. The enzyme catalyses acetate + ATP = acetyl phosphate + ADP. It functions in the pathway metabolic intermediate biosynthesis; acetyl-CoA biosynthesis; acetyl-CoA from acetate: step 1/2. Its function is as follows. Catalyzes the formation of acetyl phosphate from acetate and ATP. Can also catalyze the reverse reaction. The polypeptide is Acetate kinase (Cronobacter sakazakii (strain ATCC BAA-894) (Enterobacter sakazakii)).